Here is a 795-residue protein sequence, read N- to C-terminus: Protein Jade-3 (795 aa).

Residues 1 to 25 are compositionally biased toward low complexity; sequence MKRLRTPSSSDSSDNESPSTSFSSN. The interval 1 to 41 is disordered; that stretch reads MKRLRTPSSSDSSDNESPSTSFSSNKYGSKPGTPASAQKKP. The PHD-type 1 zinc-finger motif lies at 201 to 251; it reads DVICDVCRSPDSEEGNDMVFCDKCNICVHQACYGIVKVPDGNWLCRTCVLG. The C2HC pre-PHD-type zinc-finger motif lies at 253–287; that stretch reads TPQCLLCPKTGGAMKATRAGTKWAHVSCALWIPEV. The PHD-type 2 zinc finger occupies 311–367; the sequence is LICSLCKLKTGACIQCSVKNCTIPFHVTCAFEHSLEMKTILDEGDEVKFKSYCLKHS. Disordered stretches follow at residues 630-654, 667-687, and 714-795; these read HGQS…NGIL, AASE…SGFH, and FEKN…SVQR. Composition is skewed to polar residues over residues 678-687 and 720-732; these read SGKSQSSGFH and KSSG…STER.

It belongs to the JADE family. Component of the HBO1 complex.

Functionally, scaffold subunit of some HBO1 complexes, which have a histone H4 acetyltransferase activity. This is Protein Jade-3 (jade3) from Danio rerio (Zebrafish).